The primary structure comprises 515 residues: Zinc metalloproteinase-disintegrin BA-5A (515 aa).

A signal peptide spans 1–20 (MMQVLLVTICLAVFPYQGSS). Residues 21-193 (IILESGNVND…KEASQLVATS (173 aa)) constitute a propeptide that is removed on maturation. The Peptidase M12B domain occupies 203–399 (RYIKYFIVVD…YKPDCTLIRP (197 aa)). Residue asparagine 263 is glycosylated (N-linked (GlcNAc...) asparagine). Disulfide bonds link cysteine 314–cysteine 394, cysteine 354–cysteine 378, cysteine 356–cysteine 361, cysteine 410–cysteine 429, cysteine 421–cysteine 439, cysteine 423–cysteine 434, cysteine 433–cysteine 456, cysteine 447–cysteine 453, cysteine 452–cysteine 478, cysteine 465–cysteine 485, and cysteine 472–cysteine 497. Histidine 339 contacts Zn(2+). Glutamate 340 is an active-site residue. 2 residues coordinate Zn(2+): histidine 343 and histidine 349. The N-linked (GlcNAc...) asparagine glycan is linked to asparagine 377. One can recognise a Disintegrin domain in the interval 407–493 (PPVCGNDILE…DCPIDHFHRN (87 aa)). Positions 471 to 473 (ECD) match the D/ECD-tripeptide motif.

Belongs to the venom metalloproteinase (M12B) family. P-II subfamily. As to quaternary structure, monomer. It depends on Zn(2+) as a cofactor. Expressed by the venom gland.

Its subcellular location is the secreted. Its function is as follows. Snake venom zinc metalloprotease that possesses hemorrhagic activity and degrades alpha chain of fibrinogen (FGA). May inhibit alpha-2/beta-1 integrin (ITGA2/ITGB1). This Bitis arietans (African puff adder) protein is Zinc metalloproteinase-disintegrin BA-5A.